Reading from the N-terminus, the 455-residue chain is Fez family zinc finger protein 2 (455 aa).

Residues 1 to 22 form a disordered region; that stretch reads MASSASLETMVPPACPRAGASP. Positions 27 to 42 match the Engrailed homology 1 repressor motif; it reads TLAFSIERIMAKTSEP. 6 C2H2-type zinc fingers span residues 272–294, 300–322, 328–350, 356–378, 384–406, and 412–435; these read FTCEVCGKVFNAHYNLTRHMPVH, FVCKVCGKGFRQASTLCRHKIIH, HKCNQCGKAFNRSSTLNTHIRIH, FVCEFCGKGFHQKGNYKNHKLTH, YKCTICNKAFHQVYNLTFHMHTH, and FTCATCGKGFCRNFDLKKHVRKLH.

It belongs to the krueppel C2H2-type zinc-finger protein family. As to expression, highly expressed in neocortical layer V, moderately expressed in layer VI. Expressed in subcortically projecting neurons.

The protein resides in the nucleus. Functionally, transcription repressor. Required for the specification of corticospinal motor neurons and other subcerebral projection neurons. May play a role in layer and neuronal subtype-specific patterning of subcortical projections and axonal fasciculation. Controls the development of dendritic arborization and spines of large layer V pyramidal neurons. Plays a role in rostro-caudal patterning of the diencephalon and in prethalamic formation. This is Fez family zinc finger protein 2 (Fezf2) from Mus musculus (Mouse).